Here is a 69-residue protein sequence, read N- to C-terminus: uncharacterized protein (69 aa).

Topologically, residues 1 to 15 (MLLYIVIIVACIISK) are cytoplasmic. A helical transmembrane segment spans residues 16-36 (LVPNEYWAIHLFFIIMIFMVY). Over 37–69 (MYKKLDIHQKYQFWNYTMSGLSGHNVQVTCKCY) the chain is Extracellular. Residue asparagine 51 is glycosylated (N-linked (GlcNAc...) asparagine; by host).

This sequence belongs to the asfivirus X69R family.

It is found in the host membrane. This is an uncharacterized protein from African swine fever virus (isolate Tick/Malawi/Lil 20-1/1983) (ASFV).